Reading from the N-terminus, the 447-residue chain is BAG family molecular chaperone regulator 5 (447 aa).

5 BAG domains span residues 9 to 86, 95 to 167, 182 to 260, 275 to 350, and 365 to 442; these read SISR…EQNA, QNIF…ENCM, SVAK…DLEE, SILK…DLKE, and SHKA…DLKS.

Binds to the ATPase domain of HSP/HSP70 chaperones. Binds PRKN. Interacts complex with HSPA8 and JPH2.

Functionally, co-chaperone for HSP/HSP70 proteins. It functions as a nucleotide-exchange factor promoting the release of ADP from HSP70, thereby activating Hsp70-mediated protein refolding. Has an essential role in maintaining proteostasis at junctional membrane complexes (JMC), where it may function as a scaffold between the HSPA8 chaperone and JMC proteins enabling correct, HSPA8-dependent JMC protein folding. Inhibits both auto-ubiquitination of PRKN and ubiquitination of target proteins by PRKN. This is BAG family molecular chaperone regulator 5 (BAG5) from Bos taurus (Bovine).